A 142-amino-acid chain; its full sequence is Large ribosomal subunit protein uL11 (142 aa).

It belongs to the universal ribosomal protein uL11 family. Part of the ribosomal stalk of the 50S ribosomal subunit. Interacts with L10 and the large rRNA to form the base of the stalk. L10 forms an elongated spine to which L12 dimers bind in a sequential fashion forming a multimeric L10(L12)X complex. One or more lysine residues are methylated.

Forms part of the ribosomal stalk which helps the ribosome interact with GTP-bound translation factors. The chain is Large ribosomal subunit protein uL11 from Yersinia pestis bv. Antiqua (strain Angola).